The primary structure comprises 293 residues: tRNA pseudouridine synthase B (293 aa).

Residue Asp-38 is the Nucleophile of the active site.

It belongs to the pseudouridine synthase TruB family. Type 1 subfamily.

The enzyme catalyses uridine(55) in tRNA = pseudouridine(55) in tRNA. Functionally, responsible for synthesis of pseudouridine from uracil-55 in the psi GC loop of transfer RNAs. This chain is tRNA pseudouridine synthase B, found in Nostoc sp. (strain PCC 7120 / SAG 25.82 / UTEX 2576).